We begin with the raw amino-acid sequence, 131 residues long: MFIGVGTDIVQIPRIEKILHLYPELFAKKILTSKELAQFSLLDKTGHAVFLAKRFAAKEAVSKAFGVGIGQGINLKDITILNDNLGKPIVEVSSNYTKKLPPFNIHLSLSDDYPVCVAFAVIESSCNVISR.

Mg(2+) is bound by residues Asp-8 and Glu-59.

It belongs to the P-Pant transferase superfamily. AcpS family. It depends on Mg(2+) as a cofactor.

The protein localises to the cytoplasm. The catalysed reaction is apo-[ACP] + CoA = holo-[ACP] + adenosine 3',5'-bisphosphate + H(+). Functionally, transfers the 4'-phosphopantetheine moiety from coenzyme A to a Ser of acyl-carrier-protein. The sequence is that of Holo-[acyl-carrier-protein] synthase from Rickettsia felis (strain ATCC VR-1525 / URRWXCal2) (Rickettsia azadi).